We begin with the raw amino-acid sequence, 90 residues long: Small ribosomal subunit protein uS19 (90 aa).

This sequence belongs to the universal ribosomal protein uS19 family.

Functionally, protein S19 forms a complex with S13 that binds strongly to the 16S ribosomal RNA. This is Small ribosomal subunit protein uS19 from Thioalkalivibrio sulfidiphilus (strain HL-EbGR7).